Reading from the N-terminus, the 94-residue chain is UPF0235 protein TON_0641 (94 aa).

It belongs to the UPF0235 family.

This is UPF0235 protein TON_0641 from Thermococcus onnurineus (strain NA1).